The chain runs to 206 residues: Imidazoleglycerol-phosphate dehydratase (206 aa).

It belongs to the imidazoleglycerol-phosphate dehydratase family.

It is found in the cytoplasm. The enzyme catalyses D-erythro-1-(imidazol-4-yl)glycerol 3-phosphate = 3-(imidazol-4-yl)-2-oxopropyl phosphate + H2O. It functions in the pathway amino-acid biosynthesis; L-histidine biosynthesis; L-histidine from 5-phospho-alpha-D-ribose 1-diphosphate: step 6/9. In Cutibacterium acnes (strain DSM 16379 / KPA171202) (Propionibacterium acnes), this protein is Imidazoleglycerol-phosphate dehydratase.